A 144-amino-acid polypeptide reads, in one-letter code: Small polypeptide DEVIL 15 (144 aa).

Residue Asn-8 is glycosylated (N-linked (GlcNAc...) asparagine). Residues 22–63 (SSSSKPFFTRSFSTKTSSSPSSKSHFTRSFSTKPSSSSSSSD) form a disordered region. A helical membrane pass occupies residues 104-120 (ILSKKGASVTGKCFKVA). The required for DVL/RTFL small polypeptide activity stretch occupies residues 111 to 142 (SVTGKCFKVAKEHKSRFYIIKRCVLMLVCWHK).

Belongs to the DVL/RTFL small polypeptides family.

It is found in the cell membrane. In terms of biological role, small polypeptide acting as a regulatory molecule which coordinates cellular responses required for differentiation, growth and development, probably by restricting polar cell proliferation in lateral organs and coordinating socket cell recruitment and differentiation at trichome sites. In Arabidopsis thaliana (Mouse-ear cress), this protein is Small polypeptide DEVIL 15.